Consider the following 439-residue polypeptide: MFDLPTVAPLDMEDSWVTFQAEGDQGQDSFSSSVNLDDSLTSLQWLQEFSILNANVGKTPSSSGDSHGYRHLSGAPCSPLAADPACLGMPHTPGKPISSSTSRASHLGLQPMEEIDYKTNPHVKPPYSYATLICMAMQASKKTKITLSAIYKWITDNFCYFRHADPTWQNSIRHNLSLNKCFIKVPREKDEPGKGGFWKIDPQYADRLMNGAMKKRRLPPVQIHPAFASAQAAASSNGNRASAWQMSVNSESHKLLKEFEEITSEQSWNALGEHGWNAISDGKSHKRKQPLPKRMFKAPRLSSSPMLSQEEQTELGSLKGDFDWEVIFDSSINGVNFSAFEDLEVTPPLSPVSRSVDLTVHGKHIDCPQQWYPMGQDQAVAQNSLDFDETFLATSFLQHPWEENRNDYLSNSANIEQLFDLNDAFPAELNDWPALGSYI.

The segment at residues 124 to 218 (KPPYSYATLI…MNGAMKKRRL (95 aa)) is a DNA-binding region (fork-head).

Belongs to the FOXJ1 family.

The protein resides in the nucleus. Functionally, key transcription factor required for motile ciliogenesis. Activates genes essential for motile cilia formation and function. This chain is Forkhead box protein J1-B (foxj1-b), found in Xenopus laevis (African clawed frog).